The following is a 758-amino-acid chain: 5-methyltetrahydropteroyltriglutamate--homocysteine methyltransferase (758 aa).

Residues 16–19 and lysine 112 contribute to the 5-methyltetrahydropteroyltri-L-glutamate site; that span reads RELK. L-homocysteine contacts are provided by residues 433–435 and glutamate 486; that span reads IGS. L-methionine is bound by residues 433 to 435 and glutamate 486; that span reads IGS. Residues 517–518 and tryptophan 563 contribute to the 5-methyltetrahydropteroyltri-L-glutamate site; that span reads RC. Aspartate 601 is an L-homocysteine binding site. L-methionine is bound at residue aspartate 601. Residue glutamate 607 coordinates 5-methyltetrahydropteroyltri-L-glutamate. Zn(2+) contacts are provided by histidine 643, cysteine 645, and glutamate 667. The active-site Proton donor is the histidine 696. Position 728 (cysteine 728) interacts with Zn(2+).

It belongs to the vitamin-B12 independent methionine synthase family. Requires Zn(2+) as cofactor.

It catalyses the reaction 5-methyltetrahydropteroyltri-L-glutamate + L-homocysteine = tetrahydropteroyltri-L-glutamate + L-methionine. It functions in the pathway amino-acid biosynthesis; L-methionine biosynthesis via de novo pathway; L-methionine from L-homocysteine (MetE route): step 1/1. In terms of biological role, catalyzes the transfer of a methyl group from 5-methyltetrahydrofolate to homocysteine resulting in methionine formation. This Neisseria meningitidis serogroup A / serotype 4A (strain DSM 15465 / Z2491) protein is 5-methyltetrahydropteroyltriglutamate--homocysteine methyltransferase.